The chain runs to 466 residues: Ribulose bisphosphate carboxylase large chain (466 aa).

Lys-4 bears the N6,N6,N6-trimethyllysine mark. The substrate site is built by Asn-113 and Thr-163. Catalysis depends on Lys-165, which acts as the Proton acceptor. Residue Lys-167 coordinates substrate. Lys-191, Asp-193, and Glu-194 together coordinate Mg(2+). Lys-191 bears the N6-carboxylysine mark. His-284 (proton acceptor) is an active-site residue. Residues Arg-285, His-317, and Ser-369 each contribute to the substrate site.

It belongs to the RuBisCO large chain family. Type I subfamily. As to quaternary structure, heterohexadecamer of 8 large chains and 8 small chains; disulfide-linked. The disulfide link is formed within the large subunit homodimers. It depends on Mg(2+) as a cofactor. In terms of processing, the disulfide bond which can form in the large chain dimeric partners within the hexadecamer appears to be associated with oxidative stress and protein turnover.

The protein resides in the plastid. It is found in the chloroplast. The catalysed reaction is 2 (2R)-3-phosphoglycerate + 2 H(+) = D-ribulose 1,5-bisphosphate + CO2 + H2O. It catalyses the reaction D-ribulose 1,5-bisphosphate + O2 = 2-phosphoglycolate + (2R)-3-phosphoglycerate + 2 H(+). Functionally, ruBisCO catalyzes two reactions: the carboxylation of D-ribulose 1,5-bisphosphate, the primary event in carbon dioxide fixation, as well as the oxidative fragmentation of the pentose substrate in the photorespiration process. Both reactions occur simultaneously and in competition at the same active site. This is Ribulose bisphosphate carboxylase large chain from Proboscidea louisianica (Louisiana Devil's-claw).